The sequence spans 335 residues: Protein STRICTOSIDINE SYNTHASE-LIKE 12 (335 aa).

An N-terminal signal peptide occupies residues 1–22 (MTSFCSMISLLLLLSLSSAVFS). An N-linked (GlcNAc...) asparagine glycan is attached at asparagine 80.

Belongs to the strictosidine synthase family.

It localises to the vacuole. The catalysed reaction is 3alpha(S)-strictosidine + H2O = secologanin + tryptamine. Its pathway is alkaloid biosynthesis; 3alpha(S)-strictosidine biosynthesis; 3alpha(S)-strictosidine from secologanin and tryptamine: step 1/1. Catalyzes the stereospecific condensation of tryptamine with secologanin to form strictosidine, the key intermediate of indole alkaloid biosynthesis. This chain is Protein STRICTOSIDINE SYNTHASE-LIKE 12, found in Arabidopsis thaliana (Mouse-ear cress).